We begin with the raw amino-acid sequence, 223 residues long: Probable iron-sulfur cluster repair protein HI_1677 (223 aa).

The protein belongs to the RIC family.

It is found in the cytoplasm. Functionally, di-iron-containing protein involved in the repair of iron-sulfur clusters. The chain is Probable iron-sulfur cluster repair protein HI_1677 from Haemophilus influenzae (strain ATCC 51907 / DSM 11121 / KW20 / Rd).